A 188-amino-acid polypeptide reads, in one-letter code: Ribosome maturation factor RimM (188 aa).

In terms of domain architecture, PRC barrel spans 98–171; that stretch reads EGEFFQGDLV…RIVIHPPEYV (74 aa).

This sequence belongs to the RimM family. In terms of assembly, binds ribosomal protein uS19.

It is found in the cytoplasm. In terms of biological role, an accessory protein needed during the final step in the assembly of 30S ribosomal subunit, possibly for assembly of the head region. Essential for efficient processing of 16S rRNA. May be needed both before and after RbfA during the maturation of 16S rRNA. It has affinity for free ribosomal 30S subunits but not for 70S ribosomes. This is Ribosome maturation factor RimM from Myxococcus xanthus (strain DK1622).